The primary structure comprises 359 residues: Outer membrane protein P5 (359 aa).

An N-terminal signal peptide occupies residues 1-21; that stretch reads MKKTAIALVVAGLAAASVAQA. Transmembrane regions (beta stranded) follow at residues 27 to 37, 64 to 75, 83 to 91, 110 to 121, 126 to 134, 164 to 173, 178 to 185, and 211 to 219; these read TFYAGVKAGQG, TFTYGVFGGYQI, LAAELGYDD, HGAYLSLKGSYE, LDVYGKAGV, GLFAVGAEYA, LAVRLEYQ, and CINAGISYR. The region spanning 233-359 is the OmpA-like domain; that stretch reads MVSKTFSLNS…RVEIAVNGTK (127 aa). Cys332 and Cys344 are joined by a disulfide.

It belongs to the outer membrane OOP (TC 1.B.6) superfamily. OmpA family. Monomer and homodimer.

Its subcellular location is the cell outer membrane. It localises to the fimbrium. Acts as a fimbriae subunit, allowing adhesion to host cells. Functionally, with TolR probably plays a role in maintaining the position of the peptidoglycan cell wall in the periplasm. Acts as a porin with low permeability that allows slow penetration of small solutes; an internal gate slows down solute passage. This chain is Outer membrane protein P5, found in Haemophilus influenzae.